A 523-amino-acid polypeptide reads, in one-letter code: GMP synthase [glutamine-hydrolyzing] (523 aa).

The region spanning 8-205 (RILILDFGSQ…IRELCECEAL (198 aa)) is the Glutamine amidotransferase type-1 domain. The Nucleophile role is filled by C85. Active-site residues include H179 and E181. Positions 206–398 (WTPSNIISDA…LGLPYDMVYR (193 aa)) constitute a GMPS ATP-PPase domain. Residue 233–239 (SGGVDSS) coordinates ATP.

As to quaternary structure, homodimer.

It catalyses the reaction XMP + L-glutamine + ATP + H2O = GMP + L-glutamate + AMP + diphosphate + 2 H(+). Its pathway is purine metabolism; GMP biosynthesis; GMP from XMP (L-Gln route): step 1/1. Catalyzes the synthesis of GMP from XMP. This is GMP synthase [glutamine-hydrolyzing] from Alcanivorax borkumensis (strain ATCC 700651 / DSM 11573 / NCIMB 13689 / SK2).